Consider the following 82-residue polypeptide: MKFFLFFVILLAMEPVISGKHHILRCMGNTGICRPSCRKTEQPYLYCLNYQSCCLQSYMRISISGREEKDDWSQQNRWPKIS.

Positions 1 to 19 (MKFFLFFVILLAMEPVISG) are cleaved as a signal peptide. 3 cysteine pairs are disulfide-bonded: cysteine 26–cysteine 53, cysteine 33–cysteine 47, and cysteine 37–cysteine 54.

The protein belongs to the beta-defensin family.

The protein resides in the secreted. Functionally, has antibacterial activity. This chain is Beta-defensin 119 (DEFB119), found in Canis lupus familiaris (Dog).